A 428-amino-acid chain; its full sequence is Nucleotidyltransferase MB21D2 (428 aa).

The tract at residues Q366–D389 is disordered. The segment covering R368 to S379 has biased composition (polar residues). A Phosphothreonine modification is found at T372. Residues S373, S376, and S379 each carry the phosphoserine modification.

Belongs to the mab-21 family.

In terms of biological role, probable nucleotidyltransferase that catalyzes the formation of cyclic dinucleotide second messenger in response to some unknown stimulus. The protein is Nucleotidyltransferase MB21D2 of Mus musculus (Mouse).